Consider the following 694-residue polypeptide: TBC1 domain family member 14 (694 aa).

Position 92 is a phosphoserine (Ser92). Residues 272–289 (TAQKDSKKTQKEYEDKAG) are compositionally biased toward basic and acidic residues. Positions 272–305 (TAQKDSKKTQKEYEDKAGRPSRPPSPKQNVRKNL) are disordered. Residue Ser296 is modified to Phosphoserine. The Rab-GAP TBC domain maps to 402-612 (GIPPSVRGKV…RIWDVFCRDG (211 aa)).

As to quaternary structure, interacts with ULK1. May interact with RAB11A and RAB11B, but does not exhibit any GTPase-activating activity toward these proteins. Interacts with TRAPPC8.

It is found in the golgi apparatus. The protein resides in the cis-Golgi network. The protein localises to the trans-Golgi network. Functionally, plays a role in the regulation of starvation-induced autophagosome formation. Together with the TRAPPIII complex, regulates a constitutive trafficking step from peripheral recycling endosomes to the early Golgi, maintaining the cycling pool of ATG9 required for initiation of autophagy. The polypeptide is TBC1 domain family member 14 (Tbc1d14) (Mus musculus (Mouse)).